Reading from the N-terminus, the 418-residue chain is MKKINLKDKEIEKIINNEQQRQEEHIELIASENYVSKDVLEATGSILTNKYSEGYPGARYYDGCEFVDQIETLAIERLKKLFNVKFANVQPHSGSSANSAAIAALVKPGGKILGMSLDAGGHLTHGYKISFSGTFYDPYFYGVNDEGLLDYDVIEKLAEKIKPELIICGASNYSRTIDFEKFSKIAKKVGAFLLADIAHIAGLIIADLHPSPVGHADVITSTTHKTIRGARGGIIMSNDETLMKKIDRWVFPGYQGGPLVHVIAGKAVAFGEALTPQFKKYQQQIISNAKAFSEEFKKVGTKIISGQTDNHLFTIDVKSSFNISGKEASELMHSINITANKNSIPNDTLGPKISSGVRMGTPAMTTRGFKEVEFKKLARIIIELLANSTSSNLESLKLKLKNEVLELTKAFPTKDYYL.

(6S)-5,6,7,8-tetrahydrofolate contacts are provided by residues Leu117 and Gly121–Leu123. At Lys225 the chain carries N6-(pyridoxal phosphate)lysine.

This sequence belongs to the SHMT family. Homodimer. It depends on pyridoxal 5'-phosphate as a cofactor.

The protein localises to the cytoplasm. It carries out the reaction (6R)-5,10-methylene-5,6,7,8-tetrahydrofolate + glycine + H2O = (6S)-5,6,7,8-tetrahydrofolate + L-serine. It functions in the pathway one-carbon metabolism; tetrahydrofolate interconversion. The protein operates within amino-acid biosynthesis; glycine biosynthesis; glycine from L-serine: step 1/1. Catalyzes the reversible interconversion of serine and glycine with tetrahydrofolate (THF) serving as the one-carbon carrier. This reaction serves as the major source of one-carbon groups required for the biosynthesis of purines, thymidylate, methionine, and other important biomolecules. Also exhibits THF-independent aldolase activity toward beta-hydroxyamino acids, producing glycine and aldehydes, via a retro-aldol mechanism. This Mycoplasma mobile (strain ATCC 43663 / 163K / NCTC 11711) (Mesomycoplasma mobile) protein is Serine hydroxymethyltransferase.